A 459-amino-acid polypeptide reads, in one-letter code: MSNFAIILAAGKGTRMKSDLPKVLHKVAGISMLEHVFRSVGAIQPEKTVTVVGHKAELVEEVLAGQTEFVTQSEQLGTGHAVMMTEPILEGLSGHTLVIAGDTPLITGESLKNLIDFHINHKNVATILTAETDNPFGYGRIVRNDNAEVLRIVEQKDATDFEKQIKEINTGTYVFDNERLFEALKNINTNNAQGEYYITDVIGIFRETGEKVGAYTLKDFDESLGVNDRVALATAESVMRRRINHKHMVNGVSFVNPEATYIDIDVEIAPEVQIEANVTLKGQTKIGAETVLTNGTYVVDSTIGAGAVITNSMIEESSVADGVTVGPYAHIRPNSSLGAQVHIGNFVEVKGSSIGENTKAGHLTYIGNCEVGSNVNFGAGTITVNYDGKNKYKTVIGDNVFVGSNSTIIAPVELGDNSLVGAGSTITKDVPADAIAIGRGRQINKDEYATRLPHHPKNQ.

The interval Met-1–Arg-229 is pyrophosphorylase. UDP-N-acetyl-alpha-D-glucosamine-binding positions include Leu-8 to Gly-11, Lys-22, Gln-72, and Gly-77 to Thr-78. Asp-102 is a binding site for Mg(2+). Gly-139, Glu-154, Asn-169, and Asn-227 together coordinate UDP-N-acetyl-alpha-D-glucosamine. Asn-227 contributes to the Mg(2+) binding site. The linker stretch occupies residues Val-230–Asn-250. Positions Gly-251–Gln-459 are N-acetyltransferase. UDP-N-acetyl-alpha-D-glucosamine is bound by residues Arg-332 and Lys-350. His-362 acts as the Proton acceptor in catalysis. The UDP-N-acetyl-alpha-D-glucosamine site is built by Tyr-365 and Asn-376. Acetyl-CoA contacts are provided by residues Ala-379, Asn-385 to Tyr-386, Ser-404, Ala-422, and Arg-439.

It in the N-terminal section; belongs to the N-acetylglucosamine-1-phosphate uridyltransferase family. This sequence in the C-terminal section; belongs to the transferase hexapeptide repeat family. In terms of assembly, homotrimer. It depends on Mg(2+) as a cofactor.

It localises to the cytoplasm. It catalyses the reaction alpha-D-glucosamine 1-phosphate + acetyl-CoA = N-acetyl-alpha-D-glucosamine 1-phosphate + CoA + H(+). It carries out the reaction N-acetyl-alpha-D-glucosamine 1-phosphate + UTP + H(+) = UDP-N-acetyl-alpha-D-glucosamine + diphosphate. The protein operates within nucleotide-sugar biosynthesis; UDP-N-acetyl-alpha-D-glucosamine biosynthesis; N-acetyl-alpha-D-glucosamine 1-phosphate from alpha-D-glucosamine 6-phosphate (route II): step 2/2. Its pathway is nucleotide-sugar biosynthesis; UDP-N-acetyl-alpha-D-glucosamine biosynthesis; UDP-N-acetyl-alpha-D-glucosamine from N-acetyl-alpha-D-glucosamine 1-phosphate: step 1/1. It functions in the pathway bacterial outer membrane biogenesis; LPS lipid A biosynthesis. Its function is as follows. Catalyzes the last two sequential reactions in the de novo biosynthetic pathway for UDP-N-acetylglucosamine (UDP-GlcNAc). The C-terminal domain catalyzes the transfer of acetyl group from acetyl coenzyme A to glucosamine-1-phosphate (GlcN-1-P) to produce N-acetylglucosamine-1-phosphate (GlcNAc-1-P), which is converted into UDP-GlcNAc by the transfer of uridine 5-monophosphate (from uridine 5-triphosphate), a reaction catalyzed by the N-terminal domain. This Streptococcus pneumoniae (strain Hungary19A-6) protein is Bifunctional protein GlmU.